An 811-amino-acid polypeptide reads, in one-letter code: Lysine-specific histone demethylase 1 homolog 3 (811 aa).

Positions 1 to 10 (MSDQPPPYTP) are enriched in pro residues. The interval 1–79 (MSDQPPPYTP…PSAQPPPRAS (79 aa)) is disordered. Positions 44-55 (NKRKRTGFRRKL) are enriched in basic residues. The segment covering 56 to 71 (PSGSPAAPVAVAASPS) has biased composition (low complexity). Residues 88–189 (NREPTAEAVT…FGVAPAIKER (102 aa)) form the SWIRM domain. FAD-binding residues include glutamate 227, arginine 229, arginine 235, and glutamate 609. The segment at 790–811 (RNSSRTKTRPSKLKIGIPKSKS) is disordered.

This sequence belongs to the flavin monoamine oxidase family. FAD is required as a cofactor.

Functionally, probable histone demethylase. This is Lysine-specific histone demethylase 1 homolog 3 from Oryza sativa subsp. japonica (Rice).